A 1031-amino-acid chain; its full sequence is Protein draper (1031 aa).

An N-terminal signal peptide occupies residues 1–16; that stretch reads MLPVILIACLAQLVLA. Over 17–800 the chain is Extracellular; the sequence is QADLKDLDGP…DQSENSSRAS (784 aa). The region spanning 25 to 100 is the EMI domain; sequence GPNICKRREL…YIASAGECVP (76 aa). 6 disulfide bridges follow: Cys29–Cys88, Cys55–Cys62, Cys87–Cys98, Cys102–Cys111, Cys106–Cys117, and Cys119–Cys128. Asn73 carries an N-linked (GlcNAc...) asparagine glycan. EGF-like domains lie at 99 to 129, 137 to 172, 180 to 215, 223 to 258, 266 to 301, and 309 to 344; these read VPHC…PACD, YGRN…ARCA, FGAN…PLCD, HGAQ…DVCA, YGPG…ERCF, and YGFN…AKCA. A glycan (N-linked (GlcNAc...) asparagine) is linked at Asn140. 3 cysteine pairs are disulfide-bonded: Cys141–Cys153, Cys147–Cys160, and Cys162–Cys171. Asn183 carries N-linked (GlcNAc...) asparagine glycosylation. Disulfide bonds link Cys184–Cys196, Cys190–Cys203, Cys205–Cys214, Cys227–Cys239, Cys233–Cys246, Cys248–Cys257, Cys270–Cys282, Cys276–Cys289, and Cys291–Cys300. Asn312 is a glycosylation site (N-linked (GlcNAc...) asparagine). 3 disulfides stabilise this stretch: Cys313–Cys325, Cys319–Cys332, and Cys334–Cys343. A glycan (N-linked (GlcNAc...) asparagine) is linked at Asn329. N-linked (GlcNAc...) asparagine glycosylation occurs at Asn358. EGF-like domains follow at residues 398 to 433 and 484 to 519; these read YGPN…PTCE and FGQD…ERCE. Intrachain disulfides connect Cys402/Cys414, Cys408/Cys421, Cys423/Cys432, Cys488/Cys500, Cys494/Cys507, and Cys509/Cys518. An N-linked (GlcNAc...) asparagine glycan is attached at Asn418. Asn504 carries N-linked (GlcNAc...) asparagine glycosylation. Residues Asn540, Asn584, and Asn585 are each glycosylated (N-linked (GlcNAc...) asparagine). One can recognise an EGF-like 9 domain in the interval 572-607; it reads YGENCDKVCRCLNNSSCDPDSGNCICSAGWTGADCA. 3 disulfides stabilise this stretch: Cys576-Cys588, Cys582-Cys595, and Cys597-Cys606. Asn630 is a glycosylation site (N-linked (GlcNAc...) asparagine). The EGF-like 10 domain maps to 660-695; the sequence is YGPGCKLKCNCEHGGECNHVTGQCQCLPGWTGSNCN. Cystine bridges form between Cys664-Cys676, Cys670-Cys683, and Cys685-Cys694. 2 N-linked (GlcNAc...) asparagine glycosylation sites follow: Asn695 and Asn795. The helical transmembrane segment at 801–821 threads the bilayer; sequence VALTLVLMTLFACIIFAVFIY. Topologically, residues 822-1031 are cytoplasmic; the sequence is YRRRVSNLKT…SPSSSPKFLK (210 aa). The span at 940 to 954 shows a compositional bias: basic and acidic residues; sequence KEGYKDPDEYDHLDY. Disordered stretches follow at residues 940–964 and 989–1031; these read KEGY…QKPH and TVLL…KFLK. Polar residues predominate over residues 1009-1031; that stretch reads DNTNTNLDNVSTASPSSSPKFLK.

Belongs to the MEGF family. Interacts (via the cytoplasmic domain) with shark; this is required for the recruitment of drpr and glial cells to severed axons and for the phagocytosis of axonal debris by glial cells following axon injury. Interacts with ced-6. In terms of assembly, interacts with csw; this results in dephosphorylation of drpr isoform A which is required for the inhibition of glial cell engulfment of axonal debris produced following axonal injury. Phosphorylated on tyrosine residues. Phosphorylation is induced by binding to prtp. It is also induced by binding to the membrane phospholipid phosphatidylserine. Phosphorylation may be mediated directly or indirectly by Src42a and is required for interaction with shark. In terms of processing, dephosphorylated by csw which is required for the inhibition of glial cell engulfment of axonal debris produced following axonal injury. As to expression, expressed in adult head (at protein level). Expressed in glia, macrophages and ectoderm (at protein level). Detected in glia around the mushroom body dorsal lobe and in glial processes infiltrating the medial lobe (at protein level). Expressed in adult brain glia including antennal lobe glia (at protein level). Expressed in the larval fat body (at protein level). Expressed in the ovary (at protein level). Isoform B: Predominant isoform in adult glia.

Its subcellular location is the cell membrane. It localises to the cell projection. The protein resides in the axon. The protein localises to the cytoplasm. It is found in the postsynaptic cell membrane. Its subcellular location is the cell cortex. It localises to the phagocytic cup. The protein resides in the cytoplasmic vesicle. The protein localises to the phagosome. Receptor which is involved in the phagocytosis of a variety of cells including apoptotic cells, severed and pruned axons, degenerating dendrites, salivary gland cells, germline cells and bacteria. Binds to the ligand prtp which relocates from the endoplasmic reticulum to the cell surface during apoptosis. Ligand-binding may promote tyrosine phosphorylation mediated by Src42a, interaction with shark and subsequent activation of phagocytosis. Also binds to the membrane phospholipid phosphatidylserine which is exposed on the surface of apoptotic cells. Required for the phagocytosis of apoptotic cells by macrophages. Also required for the phagocytosis of apoptotic neurons by glial cells in the embryonic nervous system. Acts downstream of NimC4/simu in the glial phagocytosis of apoptotic neurons. Plays a role in the glial engulfment of larval axons as part of programmed axon pruning during metamorphosis. Also mediates glial cell clearance of severed axons following axonal injury. Required for the engulfment of degenerating dendrites by epidermal cells. Required in the ovary for the engulfment and subsequent processing of dying germline cells by follicular epithelial cells through activation of the JNK/bsk pathway. Plays a role in neuromuscular junction development by mediating the clearance of presynaptic debris and immature boutons which are shed by growing synapses. Required for larval salivary gland cell death which occurs following a rise in steroid levels after puparium formation. Also involved in bacterial phagocytosis. Required for hemocyte phagocytosis of the Gram-positive bacterium S.aureus. Lipoteichoic acid, synthesized by the S.aureus lipoteichoic acid synthase ltaS, acts as a ligand for drpr in this process. Together with Src42a and shark, promotes the migration of macrophages to sites of wounding as part of a signaling cascade where Scr42a detects production of hydrogen peroxide at wound sites which triggers phosphorylation of drpr and subsequent recruitment and activation of shark. Also required for macrophage priming which occurs following phagocytosis of apoptotic cells and ensures that macrophages develop a form of molecular memory that allows them to later mount an inflammatory response to tissue damage and bacterial infection. Is also an essential factor in the regulation of muscle development and myogenesis, and as a consequence is required for normal locomotion. Likely to control the balance between skeletal muscle satellite cells proliferation and differentiation through regulation of the notch signaling pathway. In terms of biological role, promotes engulfment of axonal debris by glial cells following axonal injury. Functionally, potently inhibits glial cell engulfment of axonal debris produced following axonal injury. The chain is Protein draper from Drosophila melanogaster (Fruit fly).